Here is a 412-residue protein sequence, read N- to C-terminus: Cysteate synthase (412 aa).

Position 105 is an N6-(pyridoxal phosphate)lysine (Lys-105). Asn-131 and Thr-382 together coordinate pyridoxal 5'-phosphate.

The protein belongs to the threonine synthase family. Cysteate synthase subfamily. As to quaternary structure, homotrimer. The cofactor is pyridoxal 5'-phosphate.

The enzyme catalyses O-phospho-L-serine + sulfite + H(+) = L-cysteate + phosphate. The protein operates within cofactor biosynthesis; coenzyme M biosynthesis. Functionally, specifically catalyzes the beta-elimination of phosphate from L-phosphoserine and the beta-addition of sulfite to the dehydroalanine intermediate to produce L-cysteate. The sequence is that of Cysteate synthase from Methanocorpusculum labreanum (strain ATCC 43576 / DSM 4855 / Z).